The sequence spans 74 residues: Exodeoxyribonuclease 7 small subunit (74 aa).

It belongs to the XseB family. In terms of assembly, heterooligomer composed of large and small subunits.

The protein localises to the cytoplasm. It catalyses the reaction Exonucleolytic cleavage in either 5'- to 3'- or 3'- to 5'-direction to yield nucleoside 5'-phosphates.. Functionally, bidirectionally degrades single-stranded DNA into large acid-insoluble oligonucleotides, which are then degraded further into small acid-soluble oligonucleotides. The chain is Exodeoxyribonuclease 7 small subunit from Vesicomyosocius okutanii subsp. Calyptogena okutanii (strain HA).